We begin with the raw amino-acid sequence, 91 residues long: Putative membrane protein insertion efficiency factor (91 aa).

The interval 66–91 is disordered; the sequence is GGVDPVPSCGCHSDKETTPKEKSDNA. Over residues 77–91 the composition is skewed to basic and acidic residues; that stretch reads HSDKETTPKEKSDNA.

It belongs to the UPF0161 family.

It localises to the cell inner membrane. Could be involved in insertion of integral membrane proteins into the membrane. In Hydrogenovibrio crunogenus (strain DSM 25203 / XCL-2) (Thiomicrospira crunogena), this protein is Putative membrane protein insertion efficiency factor.